We begin with the raw amino-acid sequence, 180 residues long: Crossover junction endodeoxyribonuclease RuvC (180 aa).

Residues Asp-7, Glu-66, and Asp-138 contribute to the active site. Mg(2+)-binding residues include Asp-7, Glu-66, and Asp-138.

This sequence belongs to the RuvC family. In terms of assembly, homodimer which binds Holliday junction (HJ) DNA. The HJ becomes 2-fold symmetrical on binding to RuvC with unstacked arms; it has a different conformation from HJ DNA in complex with RuvA. In the full resolvosome a probable DNA-RuvA(4)-RuvB(12)-RuvC(2) complex forms which resolves the HJ. Mg(2+) serves as cofactor.

It is found in the cytoplasm. It catalyses the reaction Endonucleolytic cleavage at a junction such as a reciprocal single-stranded crossover between two homologous DNA duplexes (Holliday junction).. The RuvA-RuvB-RuvC complex processes Holliday junction (HJ) DNA during genetic recombination and DNA repair. Endonuclease that resolves HJ intermediates. Cleaves cruciform DNA by making single-stranded nicks across the HJ at symmetrical positions within the homologous arms, yielding a 5'-phosphate and a 3'-hydroxyl group; requires a central core of homology in the junction. The consensus cleavage sequence is 5'-(A/T)TT(C/G)-3'. Cleavage occurs on the 3'-side of the TT dinucleotide at the point of strand exchange. HJ branch migration catalyzed by RuvA-RuvB allows RuvC to scan DNA until it finds its consensus sequence, where it cleaves and resolves the cruciform DNA. This chain is Crossover junction endodeoxyribonuclease RuvC, found in Burkholderia vietnamiensis (strain G4 / LMG 22486) (Burkholderia cepacia (strain R1808)).